The chain runs to 104 residues: Inner membrane protein YjcH (104 aa).

The Cytoplasmic segment spans residues 1–24; that stretch reads MNGTIYQRIEDNAHFRELVEKRQR. A helical transmembrane segment spans residues 25 to 47; that stretch reads FATILSIIMLAVYIGFILLIAFA. Over 48-61 the chain is Periplasmic; sequence PGWLGTPLNPNTSV. A helical membrane pass occupies residues 62 to 84; it reads TRGIPIGVGVIVISFVLTGIYIW. At 85–104 the chain is on the cytoplasmic side; sequence RANGEFDRLNNEVLHEVQAS.

It is found in the cell inner membrane. The chain is Inner membrane protein YjcH (yjcH) from Escherichia coli (strain K12).